Reading from the N-terminus, the 620-residue chain is Chaperone protein HscA homolog (620 aa).

This sequence belongs to the heat shock protein 70 family.

Chaperone involved in the maturation of iron-sulfur cluster-containing proteins. Has a low intrinsic ATPase activity which is markedly stimulated by HscB. The chain is Chaperone protein HscA homolog from Pasteurella multocida (strain Pm70).